The primary structure comprises 465 residues: ATP-dependent rRNA helicase rrp3 (465 aa).

Basic and acidic residues predominate over residues 1-22 (MAPSEKKLTEDKKNSSLNKKIE). Residues 1–44 (MAPSEKKLTEDKKNSSLNKKIETSNSSSEKSSENNNGDSQNNEA) are disordered. The span at 23–36 (TSNSSSEKSSENNN) shows a compositional bias: low complexity. Residues 46–74 (KTFKELGVIDELCEACEKLGFKTPTPIQQ) carry the Q motif motif. Positions 77–248 (IPVVLNKRDV…RASLHQPVRV (172 aa)) constitute a Helicase ATP-binding domain. 90-97 (AQTGSGKT) serves as a coordination point for ATP. The short motif at 196 to 199 (DEAD) is the DEAD box element. The Helicase C-terminal domain occupies 275–419 (YLVYLVNELA…EYEIDKEGVF (145 aa)). The segment covering 442-453 (RRKSKGKLHTKR) has biased composition (basic residues). The interval 442 to 465 (RRKSKGKLHTKRKRDDLDREEQIY) is disordered. The span at 454 to 465 (KRDDLDREEQIY) shows a compositional bias: basic and acidic residues.

Belongs to the DEAD box helicase family. DDX47/RRP3 subfamily. As to quaternary structure, interacts with the SSU processome.

It localises to the nucleus. It catalyses the reaction ATP + H2O = ADP + phosphate + H(+). In terms of biological role, ATP-dependent rRNA helicase required for pre-ribosomal RNA processing. Involved in the maturation of the 35S-pre-rRNA and to its cleavage to mature 18S rRNA. This chain is ATP-dependent rRNA helicase rrp3, found in Schizosaccharomyces pombe (strain 972 / ATCC 24843) (Fission yeast).